Reading from the N-terminus, the 171-residue chain is Envelope glycoprotein N (171 aa).

Residues Met-1–Val-132 are Virion surface-facing. Residues Ser-133 to Val-153 traverse the membrane as a helical segment. Over Tyr-154–Tyr-171 the chain is Intravirion.

It belongs to the herpesviridae glycoprotein N family. As to quaternary structure, interacts (via N-terminus) with gM (via N-terminus). The gM-gN heterodimer forms the gCII complex.

The protein resides in the virion membrane. It localises to the host membrane. Its subcellular location is the host Golgi apparatus. The protein localises to the host trans-Golgi network. In terms of biological role, envelope glycoprotein necessary for proper maturation of gM and modulation of its membrane fusion activity. Also plays a critical role in virion morphogenesis. The sequence is that of Envelope glycoprotein N from Elephas maximus (Indian elephant).